The following is a 415-amino-acid chain: Gamma-glutamyl phosphate reductase (415 aa).

Belongs to the gamma-glutamyl phosphate reductase family.

Its subcellular location is the cytoplasm. The enzyme catalyses L-glutamate 5-semialdehyde + phosphate + NADP(+) = L-glutamyl 5-phosphate + NADPH + H(+). Its pathway is amino-acid biosynthesis; L-proline biosynthesis; L-glutamate 5-semialdehyde from L-glutamate: step 2/2. Functionally, catalyzes the NADPH-dependent reduction of L-glutamate 5-phosphate into L-glutamate 5-semialdehyde and phosphate. The product spontaneously undergoes cyclization to form 1-pyrroline-5-carboxylate. The protein is Gamma-glutamyl phosphate reductase of Bacillus velezensis (strain DSM 23117 / BGSC 10A6 / LMG 26770 / FZB42) (Bacillus amyloliquefaciens subsp. plantarum).